A 170-amino-acid polypeptide reads, in one-letter code: Peptide deformylase (170 aa).

The Fe cation site is built by Cys-91 and His-133. Glu-134 is an active-site residue. His-137 lines the Fe cation pocket.

The protein belongs to the polypeptide deformylase family. Fe(2+) is required as a cofactor.

The enzyme catalyses N-terminal N-formyl-L-methionyl-[peptide] + H2O = N-terminal L-methionyl-[peptide] + formate. In terms of biological role, removes the formyl group from the N-terminal Met of newly synthesized proteins. Requires at least a dipeptide for an efficient rate of reaction. N-terminal L-methionine is a prerequisite for activity but the enzyme has broad specificity at other positions. The polypeptide is Peptide deformylase (Actinobacillus pleuropneumoniae serotype 7 (strain AP76)).